Consider the following 327-residue polypeptide: Phenylalanine--tRNA ligase alpha subunit (327 aa).

Glu-252 provides a ligand contact to Mg(2+).

It belongs to the class-II aminoacyl-tRNA synthetase family. Phe-tRNA synthetase alpha subunit type 1 subfamily. In terms of assembly, tetramer of two alpha and two beta subunits. Requires Mg(2+) as cofactor.

It is found in the cytoplasm. It carries out the reaction tRNA(Phe) + L-phenylalanine + ATP = L-phenylalanyl-tRNA(Phe) + AMP + diphosphate + H(+). The polypeptide is Phenylalanine--tRNA ligase alpha subunit (Aliivibrio fischeri (strain ATCC 700601 / ES114) (Vibrio fischeri)).